The primary structure comprises 212 residues: MSHLGLADVHQSEDATPDLESFTGFGNSAAEAFIQSLAGMVNQGDVETMIRAQKQMLQRFEKTNEMLLNCNALSQSRLKSASEDFKRHVKCLSEMKKDLDYIFRKIRIIKQKLQSQFPAIYAEVQPQRSSLAEEAEDDTEAQAKKTAETPAPAAAKPVLSTKKSAATIEYVQMEEAVDNGTVEIENELIKRVCSVETANPNDSSDCTSEDTG.

The interval 128 to 159 (RSSLAEEAEDDTEAQAKKTAETPAPAAAKPVL) is disordered. Residues 148-157 (ETPAPAAAKP) are compositionally biased toward low complexity.

It belongs to the KXD1 family.

The sequence is that of KxDL motif-containing protein CG10681 from Drosophila melanogaster (Fruit fly).